We begin with the raw amino-acid sequence, 577 residues long: Phosphoethanolamine transferase CptA (577 aa).

A run of 5 helical transmembrane segments spans residues 17–37 (LGWA…IIYL), 45–65 (GLRD…LFPG), 69–89 (VIAA…LSYY), 119–139 (YFSL…ILLW), and 154–174 (LVSF…NTFI).

It belongs to the phosphoethanolamine transferase family. EptC/CptA subfamily.

The protein localises to the cell inner membrane. It participates in bacterial outer membrane biogenesis; LPS core biosynthesis. Its function is as follows. Catalyzes the addition of a phosphoethanolamine moiety to the outer membrane lipopolysaccharide core. The protein is Phosphoethanolamine transferase CptA (cptA) of Salmonella typhimurium (strain LT2 / SGSC1412 / ATCC 700720).